The following is a 182-amino-acid chain: MQVVYNFSQPGLQWKQSDHLRSLMTVTSRDWLLDRGSLTRRLRVLSDDDLEVVPLREEVGVILPHEADVLGLQLGAIGGVREVYLVGFGRPWVFARSIIVNSGSIEEGSALLQLGNMPLGDLLFGDGSFQRSEIEVCRYHDACNASARSTYPLWARRSVFKREKMHVLVQEMFLPALWEEMS.

3 residues coordinate substrate: Arg81, Leu119, and Glu171.

The protein belongs to the UbiC family.

It is found in the cytoplasm. The enzyme catalyses chorismate = 4-hydroxybenzoate + pyruvate. It functions in the pathway cofactor biosynthesis; ubiquinone biosynthesis. Removes the pyruvyl group from chorismate, with concomitant aromatization of the ring, to provide 4-hydroxybenzoate (4HB) for the ubiquinone pathway. This Pseudomonas putida (Arthrobacter siderocapsulatus) protein is Probable chorismate pyruvate-lyase.